A 131-amino-acid chain; its full sequence is D-ribose pyranase (131 aa).

Histidine 20 serves as the catalytic Proton donor. Substrate-binding positions include aspartate 28, histidine 98, and 120-122 (YAN).

This sequence belongs to the RbsD / FucU family. RbsD subfamily. As to quaternary structure, homodecamer.

The protein resides in the cytoplasm. The catalysed reaction is beta-D-ribopyranose = beta-D-ribofuranose. Its pathway is carbohydrate metabolism; D-ribose degradation; D-ribose 5-phosphate from beta-D-ribopyranose: step 1/2. Catalyzes the interconversion of beta-pyran and beta-furan forms of D-ribose. The polypeptide is D-ribose pyranase (Bacillus cereus (strain AH187)).